A 97-amino-acid polypeptide reads, in one-letter code: Apolipoprotein C-II (97 aa).

The signal sequence occupies residues 1–22; it reads MGSRFFLALFLVILMLGNEVQG. The lipid binding stretch occupies residues 63-71; sequence SMDEKLRDM. The segment at 75 to 97 is lipoprotein lipase cofactor; it reads SSAAMSTYAGIFTDQLLTLLRGE.

It belongs to the apolipoprotein C2 family. In terms of tissue distribution, adult and fetal liver, intestine and peritoneal macrophages.

The protein resides in the secreted. Its function is as follows. Component of chylomicrons, very low-density lipoproteins (VLDL), low-density lipoproteins (LDL), and high-density lipoproteins (HDL) in plasma. Plays an important role in lipoprotein metabolism as an activator of lipoprotein lipase. This Mus musculus (Mouse) protein is Apolipoprotein C-II (Apoc2).